The chain runs to 129 residues: Small ribosomal subunit protein uS11 (129 aa).

The protein belongs to the universal ribosomal protein uS11 family. In terms of assembly, part of the 30S ribosomal subunit. Interacts with proteins S7 and S18. Binds to IF-3.

Its function is as follows. Located on the platform of the 30S subunit, it bridges several disparate RNA helices of the 16S rRNA. Forms part of the Shine-Dalgarno cleft in the 70S ribosome. This is Small ribosomal subunit protein uS11 from Bacillus cereus (strain ATCC 14579 / DSM 31 / CCUG 7414 / JCM 2152 / NBRC 15305 / NCIMB 9373 / NCTC 2599 / NRRL B-3711).